The chain runs to 499 residues: Diacylglycerol kinase 1 (499 aa).

Positions 41–194 (APCCPVVVFI…IDSWHIIMRM (154 aa)) constitute a DAGKc domain. The segment at 442–479 (PCKSKSVNDPSSPMCCSNHDDDERNSLEDEDEWEEGRK) is disordered. Positions 446–456 (KSVNDPSSPMC) are enriched in polar residues. The segment covering 459–468 (NHDDDERNSL) has biased composition (basic and acidic residues).

Belongs to the eukaryotic diacylglycerol kinase family. As to quaternary structure, monomer. As to expression, highly expressed in roots.

The enzyme catalyses a 1,2-diacyl-sn-glycerol + ATP = a 1,2-diacyl-sn-glycero-3-phosphate + ADP + H(+). Its function is as follows. Phosphorylates the second messenger diacylglycerol (DAG) to generate phosphatidic acid (PA), another important signaling molecule. PA is required for plant development and responses to abiotic stress. May play a role in disease resistance responses to pathogen attack. Modulates root architecture by regulating the ratio of DAG and PA, which have opposite effect on the promotion or suppression of lateral roots vs seminal roots. Suppresses lateral root number, but promotes seminal root and crown root thickness. The chain is Diacylglycerol kinase 1 from Oryza sativa subsp. japonica (Rice).